The following is a 350-amino-acid chain: Geranylgeranyl diphosphate synthase (350 aa).

Positions 70, 73, and 102 each coordinate isopentenyl diphosphate. 2 residues coordinate Mg(2+): aspartate 109 and aspartate 113. Residues 109–113 (DDVMD) carry the DDXXD motif motif. Position 119 (arginine 119) interacts with isopentenyl diphosphate. The DDXXD motif motif lies at 240–244 (DDLIG).

Belongs to the FPP/GGPP synthase family. Mg(2+) is required as a cofactor.

It catalyses the reaction isopentenyl diphosphate + (2E,6E)-farnesyl diphosphate = (2E,6E,10E)-geranylgeranyl diphosphate + diphosphate. The protein operates within isoprenoid biosynthesis; geranylgeranyl diphosphate biosynthesis; geranylgeranyl diphosphate from farnesyl diphosphate and isopentenyl diphosphate: step 1/1. Functionally, catalyzes the condensation of isopentenyl pyrophosphate (IPP) with (2E,6E)-farnesyl diphosphate (E,E-FPP) to yield geranylgeranyl diphosphate (GGPP). This Mycobacterium tuberculosis (strain ATCC 25618 / H37Rv) protein is Geranylgeranyl diphosphate synthase.